The following is a 320-amino-acid chain: Foldase protein PrsA (320 aa).

The first 20 residues, 1–20 (MKMINKLIVPVTASALLLGA), serve as a signal peptide directing secretion. C21 carries N-palmitoyl cysteine lipidation. C21 is lipidated: S-diacylglycerol cysteine. Residues 139 to 245 (EDSKKASHIL…FGYHIIKADK (107 aa)) enclose the PpiC domain. The tract at residues 159–198 (EGLDDKEAKQKAEEIQKEVSKDPSKFGEIAKKESMDTGSA) is disordered.

It belongs to the PrsA family.

The protein resides in the cell membrane. The enzyme catalyses [protein]-peptidylproline (omega=180) = [protein]-peptidylproline (omega=0). Its function is as follows. Plays a major role in protein secretion by helping the post-translocational extracellular folding of several secreted proteins. This Staphylococcus aureus (strain MRSA252) protein is Foldase protein PrsA.